We begin with the raw amino-acid sequence, 379 residues long: MNNTEYYERLGVDKNASQDEIKKAYRKMSKKYHPDLNKEEGAEDKYKEVQEAYETLSDEQKRAAYDQYGEAGANGGFGGGGFGGASGFSGFGGASGGFGGFEDIFSSFFGGGGAQVNPNAPRQGDDLQYRINLKFEEAIFGVEKQVKYNREELCHTCGGSGAKAGTHPETCHKCGGRGQINVVRDTPLGRMQTQTTCDVCHGTGKEIKEKCTTCHGSGHEKVAHTVKVTVPAGVETGQKMRLQGQGDAGVNGGPYGDLYVVFQVEASDKFERDGAEIYYKMPMDFVQAALGDEVEVPTVHGNVKLKIPAGTQTGANFRLKGKGAPKLRGSGNGDQYVIINIVTPKNMNQAQKEALQAFAKASGIEVSGSGKKGFFDKFK.

Residues 5–69 enclose the J domain; the sequence is EYYERLGVDK…QKRAAYDQYG (65 aa). The CR-type zinc finger occupies 141–223; that stretch reads GVEKQVKYNR…CHGSGHEKVA (83 aa). Zn(2+) is bound by residues Cys154, Cys157, Cys171, Cys174, Cys197, Cys200, Cys211, and Cys214. CXXCXGXG motif repeat units follow at residues 154–161, 171–178, 197–204, and 211–218; these read CHTCGGSG, CHKCGGRG, CDVCHGTG, and CTTCHGSG.

The protein belongs to the DnaJ family. In terms of assembly, homodimer. Zn(2+) is required as a cofactor.

It is found in the cytoplasm. In terms of biological role, participates actively in the response to hyperosmotic and heat shock by preventing the aggregation of stress-denatured proteins and by disaggregating proteins, also in an autonomous, DnaK-independent fashion. Unfolded proteins bind initially to DnaJ; upon interaction with the DnaJ-bound protein, DnaK hydrolyzes its bound ATP, resulting in the formation of a stable complex. GrpE releases ADP from DnaK; ATP binding to DnaK triggers the release of the substrate protein, thus completing the reaction cycle. Several rounds of ATP-dependent interactions between DnaJ, DnaK and GrpE are required for fully efficient folding. Also involved, together with DnaK and GrpE, in the DNA replication of plasmids through activation of initiation proteins. This is Chaperone protein DnaJ from Lactococcus lactis subsp. cremoris (strain MG1363).